The chain runs to 178 residues: Orotate phosphoribosyltransferase (178 aa).

Residues Arg-92, Lys-93, Lys-96, and 118-126 (EDVITTGSS) each bind 5-phospho-alpha-D-ribose 1-diphosphate. Residues Thr-122 and Arg-150 each contribute to the orotate site.

The protein belongs to the purine/pyrimidine phosphoribosyltransferase family. PyrE subfamily. In terms of assembly, homodimer. Requires Mg(2+) as cofactor.

The catalysed reaction is orotidine 5'-phosphate + diphosphate = orotate + 5-phospho-alpha-D-ribose 1-diphosphate. It participates in pyrimidine metabolism; UMP biosynthesis via de novo pathway; UMP from orotate: step 1/2. Its function is as follows. Catalyzes the transfer of a ribosyl phosphate group from 5-phosphoribose 1-diphosphate to orotate, leading to the formation of orotidine monophosphate (OMP). In Archaeoglobus fulgidus (strain ATCC 49558 / DSM 4304 / JCM 9628 / NBRC 100126 / VC-16), this protein is Orotate phosphoribosyltransferase.